Here is a 438-residue protein sequence, read N- to C-terminus: UDP-N-acetylmuramoylalanine--D-glutamate ligase (438 aa).

105–111 serves as a coordination point for ATP; sequence GSNGKTT.

The protein belongs to the MurCDEF family.

It localises to the cytoplasm. The enzyme catalyses UDP-N-acetyl-alpha-D-muramoyl-L-alanine + D-glutamate + ATP = UDP-N-acetyl-alpha-D-muramoyl-L-alanyl-D-glutamate + ADP + phosphate + H(+). Its pathway is cell wall biogenesis; peptidoglycan biosynthesis. Its function is as follows. Cell wall formation. Catalyzes the addition of glutamate to the nucleotide precursor UDP-N-acetylmuramoyl-L-alanine (UMA). In Oenococcus oeni (strain ATCC BAA-331 / PSU-1), this protein is UDP-N-acetylmuramoylalanine--D-glutamate ligase.